The following is a 334-amino-acid chain: Cathepsin K (334 aa).

An N-terminal signal peptide occupies residues 1 to 19 (MLRLHWLALLVLLLPMAAA). The propeptide at 20–119 (QLRPEPELDA…TLYVPDWSSR (100 aa)) is activation peptide. N108 is a glycosylation site (N-linked (GlcNAc...) asparagine). Intrachain disulfides connect C141/C182, C175/C215, and C274/C323. Residue C144 is part of the active site. Active-site residues include H281 and N301.

This sequence belongs to the peptidase C1 family.

It carries out the reaction Broad proteolytic activity. With small-molecule substrates and inhibitors, the major determinant of specificity is P2, which is preferably Leu, Met &gt; Phe, and not Arg.. Closely involved in osteoclastic bone resorption and may participate partially in the disorder of bone remodeling. Displays potent endoprotease activity against fibrinogen at acid pH. May play an important role in extracellular matrix degradation. This chain is Cathepsin K (CTSK), found in Gallus gallus (Chicken).